We begin with the raw amino-acid sequence, 276 residues long: Diaminopimelate epimerase (276 aa).

Residues Asn13, Gln46, and Asn66 each contribute to the substrate site. Cys75 functions as the Proton donor in the catalytic mechanism. Residues 76–77, Asn159, Asn192, and 210–211 each bind substrate; these read GN and ER. Catalysis depends on Cys219, which acts as the Proton acceptor. 220–221 serves as a coordination point for substrate; it reads GT.

Belongs to the diaminopimelate epimerase family. As to quaternary structure, homodimer.

It is found in the cytoplasm. The catalysed reaction is (2S,6S)-2,6-diaminopimelate = meso-2,6-diaminopimelate. The protein operates within amino-acid biosynthesis; L-lysine biosynthesis via DAP pathway; DL-2,6-diaminopimelate from LL-2,6-diaminopimelate: step 1/1. Functionally, catalyzes the stereoinversion of LL-2,6-diaminopimelate (L,L-DAP) to meso-diaminopimelate (meso-DAP), a precursor of L-lysine and an essential component of the bacterial peptidoglycan. This chain is Diaminopimelate epimerase, found in Azotobacter vinelandii (strain DJ / ATCC BAA-1303).